The primary structure comprises 287 residues: Shikimate dehydrogenase (NADP(+)) (287 aa).

Residues 20–22 and Thr-67 contribute to the shikimate site; that span reads SRS. Lys-71 acts as the Proton acceptor in catalysis. Glu-84 contributes to the NADP(+) binding site. Residues Asn-93 and Asp-108 each contribute to the shikimate site. NADP(+) is bound by residues 132-136 and Met-226; that span reads GAGGA. Shikimate is bound at residue Tyr-228. Gly-250 is an NADP(+) binding site.

Belongs to the shikimate dehydrogenase family. Homodimer.

The enzyme catalyses shikimate + NADP(+) = 3-dehydroshikimate + NADPH + H(+). It participates in metabolic intermediate biosynthesis; chorismate biosynthesis; chorismate from D-erythrose 4-phosphate and phosphoenolpyruvate: step 4/7. Functionally, involved in the biosynthesis of the chorismate, which leads to the biosynthesis of aromatic amino acids. Catalyzes the reversible NADPH linked reduction of 3-dehydroshikimate (DHSA) to yield shikimate (SA). This Bordetella petrii (strain ATCC BAA-461 / DSM 12804 / CCUG 43448) protein is Shikimate dehydrogenase (NADP(+)).